Reading from the N-terminus, the 506-residue chain is Anaerobic nitric oxide reductase transcription regulator NorR (506 aa).

A 4-aspartylphosphate modification is found at D57. Residues 187–416 (MIGLSPAMTQ…LEHAIHRAVV (230 aa)) form the Sigma-54 factor interaction domain. ATP-binding positions include 215 to 222 (GETGTGKE) and 278 to 287 (ADNGTLFLDE). The H-T-H motif DNA-binding region spans 481–500 (WAASARALETDVANLHRLAK).

Its pathway is nitrogen metabolism; nitric oxide reduction. Functionally, required for the expression of anaerobic nitric oxide (NO) reductase, acts as a transcriptional activator for at least the norVW operon. Activation also requires sigma-54. This Salmonella arizonae (strain ATCC BAA-731 / CDC346-86 / RSK2980) protein is Anaerobic nitric oxide reductase transcription regulator NorR.